Reading from the N-terminus, the 309-residue chain is Glutaminase (309 aa).

Substrate contacts are provided by Ser-64, Asn-114, Glu-160, Asn-167, Tyr-191, Tyr-243, and Val-261.

The protein belongs to the glutaminase family. Homotetramer.

It carries out the reaction L-glutamine + H2O = L-glutamate + NH4(+). The chain is Glutaminase from Rhizobium etli (strain CIAT 652).